Reading from the N-terminus, the 384-residue chain is Cytochrome b (384 aa).

The next 4 helical transmembrane spans lie at 32–52 (FGSL…FLSM), 75–96 (FLLR…YFHI), 111–131 (WRVG…GYVL), and 176–196 (FFSL…VHLI). Heme b-binding residues include H81 and H95. Heme b-binding residues include H180 and H194. H199 contributes to the a ubiquinone binding site. 4 helical membrane-spanning segments follow: residues 224–244 (SKDW…VYLM), 286–306 (FGGV…PLLH), 318–338 (FGRM…WIGS), and 345–366 (FIII…LIPL).

Belongs to the cytochrome b family. In terms of assembly, the main subunits of complex b-c1 are: cytochrome b, cytochrome c1 and the Rieske protein. Heme b serves as cofactor.

Its subcellular location is the mitochondrion inner membrane. Component of the ubiquinol-cytochrome c reductase complex (complex III or cytochrome b-c1 complex) that is part of the mitochondrial respiratory chain. The b-c1 complex mediates electron transfer from ubiquinol to cytochrome c. Contributes to the generation of a proton gradient across the mitochondrial membrane that is then used for ATP synthesis. This chain is Cytochrome b (MT-CYB), found in Acropora tenuis (Purple tipped acropora).